Reading from the N-terminus, the 133-residue chain is ATP synthase epsilon chain (133 aa).

Belongs to the ATPase epsilon chain family. In terms of assembly, F-type ATPases have 2 components, CF(1) - the catalytic core - and CF(0) - the membrane proton channel. CF(1) has five subunits: alpha(3), beta(3), gamma(1), delta(1), epsilon(1). CF(0) has three main subunits: a, b and c.

The protein resides in the cell membrane. Functionally, produces ATP from ADP in the presence of a proton gradient across the membrane. In Clostridium botulinum (strain 657 / Type Ba4), this protein is ATP synthase epsilon chain.